We begin with the raw amino-acid sequence, 150 residues long: Cyanate hydratase (150 aa).

Catalysis depends on residues R91, E94, and S117.

Belongs to the cyanase family.

The catalysed reaction is cyanate + hydrogencarbonate + 3 H(+) = NH4(+) + 2 CO2. Its function is as follows. Catalyzes the reaction of cyanate with bicarbonate to produce ammonia and carbon dioxide. The protein is Cyanate hydratase of Synechococcus sp. (strain CC9311).